The following is a 389-amino-acid chain: RHOMBOID-like protein 1 (389 aa).

7 helical membrane-spanning segments follow: residues 56–76 (PWLV…SMFI), 136–156 (IWLH…IFIG), 163–183 (FGFV…SLLS), 191–211 (ISVG…SELL), 221–241 (FAAL…GILP), 244–264 (DNFA…VFLI), and 295–315 (VLWI…LVVL). Ser-196 (nucleophile) is an active-site residue. His-248 acts as the Charge relay system in catalysis.

Belongs to the peptidase S54 family. In terms of tissue distribution, expressed in roots, seedlings, leaves, stems and flowers.

It is found in the golgi apparatus membrane. The enzyme catalyses Cleaves type-1 transmembrane domains using a catalytic dyad composed of serine and histidine that are contributed by different transmembrane domains.. Probable rhomboid-type serine protease that catalyzes intramembrane proteolysis. Unable to cleave the Drosophila protein Spitz. This chain is RHOMBOID-like protein 1, found in Arabidopsis thaliana (Mouse-ear cress).